The following is a 317-amino-acid chain: DNA-directed RNA polymerase III subunit RPC6 (317 aa).

It belongs to the eukaryotic RPC34/RPC39 RNA polymerase subunit family. As to quaternary structure, component of the RNA polymerase III (Pol III) complex consisting of 17 subunits. Interacts with BRF1/TDS4.

The protein localises to the nucleus. In terms of biological role, DNA-dependent RNA polymerase catalyzes the transcription of DNA into RNA using the four ribonucleoside triphosphates as substrates. Specific peripheric component of RNA polymerase III which synthesizes small RNAs, such as 5S rRNA and tRNAs. Involved in recruitment of Pol III to the preinitiation complex. Involved in the configuration of an initiation-competent form of RNA polymerase. This is DNA-directed RNA polymerase III subunit RPC6 (RPC34) from Saccharomyces cerevisiae (strain ATCC 204508 / S288c) (Baker's yeast).